The chain runs to 138 residues: Thyrotropin subunit beta (138 aa).

A signal peptide spans 1-20; it reads MSAAVLLSVLFALACGQAAS. 6 disulfides stabilise this stretch: cysteine 22-cysteine 72, cysteine 36-cysteine 87, cysteine 39-cysteine 125, cysteine 47-cysteine 103, cysteine 51-cysteine 105, and cysteine 108-cysteine 115. Asparagine 43 carries an N-linked (GlcNAc...) asparagine glycan. A propeptide spanning residues 133–138 is cleaved from the precursor; it reads LGGFSV.

The protein belongs to the glycoprotein hormones subunit beta family. In terms of assembly, heterodimer of a common alpha chain and a unique beta chain which confers biological specificity to thyrotropin, lutropin, follitropin and gonadotropin.

It localises to the secreted. Its function is as follows. Indispensable for the control of thyroid structure and metabolism. In Mus musculus (Mouse), this protein is Thyrotropin subunit beta (Tshb).